A 347-amino-acid polypeptide reads, in one-letter code: Phenylalanine--tRNA ligase alpha subunit (347 aa).

Residues 83–111 (QNLSGGDDSGADPTFDPTLPGTRPSLGHI) form a disordered region. A Mg(2+)-binding site is contributed by glutamate 274.

Belongs to the class-II aminoacyl-tRNA synthetase family. Phe-tRNA synthetase alpha subunit type 1 subfamily. As to quaternary structure, tetramer of two alpha and two beta subunits. The cofactor is Mg(2+).

Its subcellular location is the cytoplasm. The catalysed reaction is tRNA(Phe) + L-phenylalanine + ATP = L-phenylalanyl-tRNA(Phe) + AMP + diphosphate + H(+). This Rhodopirellula baltica (strain DSM 10527 / NCIMB 13988 / SH1) protein is Phenylalanine--tRNA ligase alpha subunit.